Here is a 1086-residue protein sequence, read N- to C-terminus: Receptor-type guanylate cyclase gcy-6 (1086 aa).

Residues 1–21 form the signal peptide; sequence MIGVYLRSVIFPLLFVIQTIC. Residues 22-487 are Extracellular-facing; the sequence is QPPGNVFHLG…PANVFFQYIG (466 aa). N325, N343, N387, and N427 each carry an N-linked (GlcNAc...) asparagine glycan. The chain crosses the membrane as a helical span at residues 488 to 508; the sequence is WFIAAIIIIFFTIMGAILAFI. The Cytoplasmic segment spans residues 509–1086; that stretch reads YLCHAKQQEV…APKILKKKQD (578 aa). A Protein kinase domain is found at 560-836; the sequence is SSTLSEVGET…NDNLMDHVFN (277 aa). ATP is bound by residues 566–574 and K589; that span reads VGETRNYLF. Residues 894-1024 enclose the Guanylate cyclase domain; that stretch reads TLFFSDVVSF…DAVNTASRME (131 aa).

It belongs to the adenylyl cyclase class-4/guanylyl cyclase family. Expressed in both ASEL and ASER neurons throughout late embryonic and early larval stages. In adults, expressed asymmetrically in ASE left (ASEL) sensory neuron.

It localises to the cell membrane. It carries out the reaction GTP = 3',5'-cyclic GMP + diphosphate. Functionally, guanylate cyclase involved in the production of the second messenger cGMP. Regulates chemotaxis responses toward the salt ion Mg(2+) and to a lesser extent toward Cl(1-) in ASE left (ASEL) sensory neuron. The polypeptide is Receptor-type guanylate cyclase gcy-6 (Caenorhabditis elegans).